The primary structure comprises 175 residues: MLDLGLSKMALIGVVALVVLGPERLPRVARTAGALFGRAQRYINDVKAEVSREIELDALRTMKTDFESAARNVETTIHDNLREHEKELNDTWHSAVGGLNEAAGDAGSTGSDTAAPSWRGSTAALAPKRRNWRVKQAAAPAWYKRATTRRTHVQSGAARVARHQPASLRRPTRFF.

Residues 1–21 traverse the membrane as a helical segment; it reads MLDLGLSKMALIGVVALVVLG. The interval 155–175 is disordered; sequence SGAARVARHQPASLRRPTRFF.

Belongs to the TatB family. In terms of assembly, the Tat system comprises two distinct complexes: a TatABC complex, containing multiple copies of TatA, TatB and TatC subunits, and a separate TatA complex, containing only TatA subunits. Substrates initially bind to the TatABC complex, which probably triggers association of the separate TatA complex to form the active translocon.

It is found in the cell inner membrane. Functionally, part of the twin-arginine translocation (Tat) system that transports large folded proteins containing a characteristic twin-arginine motif in their signal peptide across membranes. Together with TatC, TatB is part of a receptor directly interacting with Tat signal peptides. TatB may form an oligomeric binding site that transiently accommodates folded Tat precursor proteins before their translocation. The protein is Sec-independent protein translocase protein TatB of Burkholderia lata (strain ATCC 17760 / DSM 23089 / LMG 22485 / NCIMB 9086 / R18194 / 383).